Consider the following 103-residue polypeptide: Nucleoid-associated protein CFF8240_0066 (103 aa).

It belongs to the YbaB/EbfC family. In terms of assembly, homodimer.

The protein localises to the cytoplasm. It localises to the nucleoid. In terms of biological role, binds to DNA and alters its conformation. May be involved in regulation of gene expression, nucleoid organization and DNA protection. The chain is Nucleoid-associated protein CFF8240_0066 from Campylobacter fetus subsp. fetus (strain 82-40).